We begin with the raw amino-acid sequence, 284 residues long: NADH-cytochrome b5 reductase 1 (284 aa).

Residues 7–27 traverse the membrane as a helical segment; the sequence is KLVVVIVIVVVPLLFKFIIGP. The FAD-binding FR-type domain occupies 38–142; it reads NDFQSFPLVE…KGPRGNYHYE (105 aa). FAD-binding positions include 122 to 137 and 148 to 180; these read GELK…GPRG and HLGM…KVSL.

Belongs to the flavoprotein pyridine nucleotide cytochrome reductase family. Monomer. Component of the 2-(3-amino-3-carboxypropyl)histidine synthase complex composed of DPH1, DPH2, KTI11/DPH3 and a NADH-dependent reductase, predominantly CBR1. Interacts with KTI11/DPH3. Interacts with STE20. Requires FAD as cofactor.

The protein localises to the mitochondrion outer membrane. The catalysed reaction is 2 Fe(III)-[cytochrome b5] + NADH = 2 Fe(II)-[cytochrome b5] + NAD(+) + H(+). The enzyme catalyses 2 Fe(3+)-[Dph3] + NADH = 2 Fe(2+)-[Dph3] + NAD(+) + H(+). It functions in the pathway protein modification; peptidyl-diphthamide biosynthesis. With respect to regulation, competitively inhibited by NAD(+). Inhibited by mercurials such as p-chloromercuribenzoate (PCMB) and HgCl(2). Enzymatic activity increases under anaerobic conditions. NADH-dependent reductase for KTI11/DPH3 and cytochrome b5. Required for the first step of diphthamide biosynthesis, a post-translational modification of histidine which occurs in elongation factor 2. DPH1 and DPH2 transfer a 3-amino-3-carboxypropyl (ACP) group from S-adenosyl-L-methionine (SAM) to a histidine residue, the reaction is assisted by a reduction system comprising KTI11/DPH3 and a NADH-dependent reductase, predominantly CBR1. By reducing KTI11/DPH3, also involved in the formation of the tRNA wobble base modification mcm5s 2U (5-methoxycarbonylmethyl-2-thiouridine), mediated by the elongator complex. The cytochrome b5/NADH cytochrome b5 reductase electron transfer system supports the catalytic activity of several sterol biosynthetic enzymes. Plays a role in bud morphology. This is NADH-cytochrome b5 reductase 1 (CBR1) from Saccharomyces cerevisiae (strain ATCC 204508 / S288c) (Baker's yeast).